The following is a 468-amino-acid chain: Chromosomal replication initiator protein DnaA (468 aa).

Residues 1–84 (MSSSLWLQCL…RFEVGSRPVA (84 aa)) are domain I, interacts with DnaA modulators. The disordered stretch occupies residues 81 to 104 (RPVAAPKPAPTRTPADVAAESSAP). A domain II region spans residues 84–131 (AAPKPAPTRTPADVAAESSAPAQLQARKPVHKTWDDDAQAIADINHRS). The segment at 132 to 348 (NVNPKHKFNN…GALNRVIANA (217 aa)) is domain III, AAA+ region. 4 residues coordinate ATP: glycine 176, glycine 178, lysine 179, and threonine 180. Residues 349-468 (NFTGRPITID…YSNLIRTLSS (120 aa)) are domain IV, binds dsDNA.

It belongs to the DnaA family. As to quaternary structure, oligomerizes as a right-handed, spiral filament on DNA at oriC.

The protein localises to the cytoplasm. In terms of biological role, plays an essential role in the initiation and regulation of chromosomal replication. ATP-DnaA binds to the origin of replication (oriC) to initiate formation of the DNA replication initiation complex once per cell cycle. Binds the DnaA box (a 9 base pair repeat at the origin) and separates the double-stranded (ds)DNA. Forms a right-handed helical filament on oriC DNA; dsDNA binds to the exterior of the filament while single-stranded (ss)DNA is stabiized in the filament's interior. The ATP-DnaA-oriC complex binds and stabilizes one strand of the AT-rich DNA unwinding element (DUE), permitting loading of DNA polymerase. After initiation quickly degrades to an ADP-DnaA complex that is not apt for DNA replication. Binds acidic phospholipids. The protein is Chromosomal replication initiator protein DnaA of Vibrio campbellii (strain ATCC BAA-1116).